The following is a 197-amino-acid chain: Imidazoleglycerol-phosphate dehydratase (197 aa).

Belongs to the imidazoleglycerol-phosphate dehydratase family.

The protein resides in the cytoplasm. The enzyme catalyses D-erythro-1-(imidazol-4-yl)glycerol 3-phosphate = 3-(imidazol-4-yl)-2-oxopropyl phosphate + H2O. It participates in amino-acid biosynthesis; L-histidine biosynthesis; L-histidine from 5-phospho-alpha-D-ribose 1-diphosphate: step 6/9. This chain is Imidazoleglycerol-phosphate dehydratase, found in Cellvibrio japonicus (strain Ueda107) (Pseudomonas fluorescens subsp. cellulosa).